The sequence spans 46 residues: Large ribosomal subunit protein bL33A (46 aa).

Belongs to the bacterial ribosomal protein bL33 family.

This is Large ribosomal subunit protein bL33A from Mesomycoplasma hyopneumoniae (strain 7448) (Mycoplasma hyopneumoniae).